Consider the following 550-residue polypeptide: Glucose-6-phosphate isomerase 1 (550 aa).

Glutamate 353 serves as the catalytic Proton donor. Active-site residues include histidine 384 and lysine 512.

This sequence belongs to the GPI family.

It localises to the cytoplasm. The catalysed reaction is alpha-D-glucose 6-phosphate = beta-D-fructose 6-phosphate. Its pathway is carbohydrate biosynthesis; gluconeogenesis. It participates in carbohydrate degradation; glycolysis; D-glyceraldehyde 3-phosphate and glycerone phosphate from D-glucose: step 2/4. Functionally, catalyzes the reversible isomerization of glucose-6-phosphate to fructose-6-phosphate. This is Glucose-6-phosphate isomerase 1 from Thiobacillus denitrificans (strain ATCC 25259 / T1).